A 1070-amino-acid polypeptide reads, in one-letter code: Carbamoyl phosphate synthase large chain (1070 aa).

A carboxyphosphate synthetic domain region spans residues 1-401; that stretch reads MPKRDDIKTI…ALLKAVRSLE (401 aa). Residues Arg129, Arg169, Gly175, Gly176, Lys208, Ile210, Glu215, Gly241, Ile242, His243, Gln284, and Glu298 each coordinate ATP. Positions 133 to 327 constitute an ATP-grasp 1 domain; that stretch reads RDLMNELGEP…IAKLAAKIAV (195 aa). Positions 284, 298, and 300 each coordinate Mg(2+). Residues Gln284, Glu298, and Asn300 each contribute to the Mn(2+) site. The segment at 402–546 is oligomerization domain; it reads IGADHLLLEE…YSTYEEENES (145 aa). The carbamoyl phosphate synthetic domain stretch occupies residues 547–929; that stretch reads TRSAKESVIV…ALYKGFVASG (383 aa). Positions 671–861 constitute an ATP-grasp 2 domain; the sequence is EKALGILQIP…MANVATRVIL (191 aa). Arg707, Arg746, Val748, Glu752, Gly777, Val778, His779, Ser780, Gln820, and Glu832 together coordinate ATP. Gln820, Glu832, and Asn834 together coordinate Mg(2+). Positions 820, 832, and 834 each coordinate Mn(2+). The MGS-like domain maps to 930-1070; that stretch reads TTMHDYGTVL…SEVKQPKARV (141 aa). The tract at residues 930-1070 is allosteric domain; sequence TTMHDYGTVL…SEVKQPKARV (141 aa).

This sequence belongs to the CarB family. As to quaternary structure, composed of two chains; the small (or glutamine) chain promotes the hydrolysis of glutamine to ammonia, which is used by the large (or ammonia) chain to synthesize carbamoyl phosphate. Tetramer of heterodimers (alpha,beta)4. Requires Mg(2+) as cofactor. Mn(2+) is required as a cofactor.

The enzyme catalyses hydrogencarbonate + L-glutamine + 2 ATP + H2O = carbamoyl phosphate + L-glutamate + 2 ADP + phosphate + 2 H(+). The catalysed reaction is hydrogencarbonate + NH4(+) + 2 ATP = carbamoyl phosphate + 2 ADP + phosphate + 2 H(+). The protein operates within amino-acid biosynthesis; L-arginine biosynthesis; carbamoyl phosphate from bicarbonate: step 1/1. It participates in pyrimidine metabolism; UMP biosynthesis via de novo pathway; (S)-dihydroorotate from bicarbonate: step 1/3. Its function is as follows. Large subunit of the glutamine-dependent carbamoyl phosphate synthetase (CPSase). CPSase catalyzes the formation of carbamoyl phosphate from the ammonia moiety of glutamine, carbonate, and phosphate donated by ATP, constituting the first step of 2 biosynthetic pathways, one leading to arginine and/or urea and the other to pyrimidine nucleotides. The large subunit (synthetase) binds the substrates ammonia (free or transferred from glutamine from the small subunit), hydrogencarbonate and ATP and carries out an ATP-coupled ligase reaction, activating hydrogencarbonate by forming carboxy phosphate which reacts with ammonia to form carbamoyl phosphate. This chain is Carbamoyl phosphate synthase large chain, found in Listeria monocytogenes serotype 4b (strain CLIP80459).